We begin with the raw amino-acid sequence, 154 residues long: MAKQEQNIVYLYCDGACRGNPGPGGWGVLLRYNQHERQLHGGVANTTNNQMELTAAIEGLKSLKKPCQVVVTTDSQYLRRGITEWLPVWKRRGWRTSNKKPVKNQPLWETLEREVERHTIVWHWVKGHSGHAENEIADELANRGIDEVLKRGVQ.

An RNase H type-1 domain is found at 5-146; that stretch reads EQNIVYLYCD…ADELANRGID (142 aa). Mg(2+) contacts are provided by Asp14, Glu52, Asp74, and Asp138.

It belongs to the RNase H family. Monomer. Requires Mg(2+) as cofactor.

It is found in the cytoplasm. It catalyses the reaction Endonucleolytic cleavage to 5'-phosphomonoester.. In terms of biological role, endonuclease that specifically degrades the RNA of RNA-DNA hybrids. The sequence is that of Ribonuclease H from Coxiella burnetii (strain RSA 331 / Henzerling II).